Consider the following 914-residue polypeptide: DNA mismatch repair protein MutS (914 aa).

The disordered stretch occupies residues 28-74; the sequence is NTNSVKDSNLNDEELSKNAELRPRKRKKSVLLQNSVGEQTEDFSNDE. Position 726-733 (726-733) interacts with ATP; it reads GPNASGKS.

Belongs to the DNA mismatch repair MutS family.

This protein is involved in the repair of mismatches in DNA. It is possible that it carries out the mismatch recognition step. This protein has a weak ATPase activity. This is DNA mismatch repair protein MutS from Prochlorococcus marinus (strain SARG / CCMP1375 / SS120).